A 178-amino-acid polypeptide reads, in one-letter code: Ribosome maturation factor RimM (178 aa).

A PRC barrel domain is found at 104–177 (SDEYYFYEVI…KIVVKLPEWL (74 aa)).

The protein belongs to the RimM family. Binds ribosomal protein uS19.

It localises to the cytoplasm. Functionally, an accessory protein needed during the final step in the assembly of 30S ribosomal subunit, possibly for assembly of the head region. Essential for efficient processing of 16S rRNA. May be needed both before and after RbfA during the maturation of 16S rRNA. It has affinity for free ribosomal 30S subunits but not for 70S ribosomes. The chain is Ribosome maturation factor RimM from Thermosipho melanesiensis (strain DSM 12029 / CIP 104789 / BI429).